The chain runs to 179 residues: GTP-dependent dephospho-CoA kinase (179 aa).

Positions 43, 45, 62, 120, and 143 each coordinate GTP.

This sequence belongs to the GTP-dependent DPCK family.

It catalyses the reaction 3'-dephospho-CoA + GTP = GDP + CoA + H(+). It participates in cofactor biosynthesis; coenzyme A biosynthesis. Functionally, catalyzes the GTP-dependent phosphorylation of the 3'-hydroxyl group of dephosphocoenzyme A to form coenzyme A (CoA). In Haloarcula marismortui (strain ATCC 43049 / DSM 3752 / JCM 8966 / VKM B-1809) (Halobacterium marismortui), this protein is GTP-dependent dephospho-CoA kinase.